The chain runs to 506 residues: Galactose/methyl galactoside import ATP-binding protein MglA (506 aa).

ABC transporter domains lie at 14-249 (LEMS…VGRS) and 264-506 (VILE…SLHL). Residue 46–53 (GENGAGKS) participates in ATP binding.

Belongs to the ABC transporter superfamily. Galactose/methyl galactoside importer (TC 3.A.1.2.3) family. As to quaternary structure, the complex is composed of one ATP-binding protein (MglA), two transmembrane proteins (MglC) and a solute-binding protein (MglB).

It is found in the cell inner membrane. The catalysed reaction is D-galactose(out) + ATP + H2O = D-galactose(in) + ADP + phosphate + H(+). It catalyses the reaction methyl beta-D-galactoside(out) + ATP + H2O = methyl beta-D-galactoside(in) + ADP + phosphate + H(+). Part of the ABC transporter complex MglABC involved in galactose/methyl galactoside import. Responsible for energy coupling to the transport system. The chain is Galactose/methyl galactoside import ATP-binding protein MglA from Yersinia pestis bv. Antiqua (strain Antiqua).